We begin with the raw amino-acid sequence, 351 residues long: Phosphoribosylformylglycinamidine cyclo-ligase (351 aa).

The protein belongs to the AIR synthase family.

The protein resides in the cytoplasm. It catalyses the reaction 2-formamido-N(1)-(5-O-phospho-beta-D-ribosyl)acetamidine + ATP = 5-amino-1-(5-phospho-beta-D-ribosyl)imidazole + ADP + phosphate + H(+). Its pathway is purine metabolism; IMP biosynthesis via de novo pathway; 5-amino-1-(5-phospho-D-ribosyl)imidazole from N(2)-formyl-N(1)-(5-phospho-D-ribosyl)glycinamide: step 2/2. The protein is Phosphoribosylformylglycinamidine cyclo-ligase of Xylella fastidiosa (strain 9a5c).